Reading from the N-terminus, the 765-residue chain is Endothelin-converting enzyme 2 (765 aa).

Over M1–E60 the chain is Cytoplasmic. A helical; Signal-anchor for type II membrane protein membrane pass occupies residues L61–L81. The Lumenal segment spans residues G82 to W765. In terms of domain architecture, Peptidase M13 spans T93–W765. Intrachain disulfides connect C94–C99, C117–C750, C125–C710, C181–C430, and C639–C762. Residues N161, N165, N206, N266, N311, N378, and N534 are each glycosylated (N-linked (GlcNAc...) asparagine). H602 serves as a coordination point for Zn(2+). The active site involves E603. H606 is a Zn(2+) binding site. Residues N627 and N635 are each glycosylated (N-linked (GlcNAc...) asparagine). Residue E662 coordinates Zn(2+). D666 functions as the Proton donor in the catalytic mechanism.

This sequence belongs to the peptidase M13 family. Zn(2+) is required as a cofactor. Isoform ECE2-1 and isoform ECE2-2 are expressed in brain and adrenal gland.

It localises to the golgi apparatus membrane. The protein resides in the cytoplasmic vesicle. The protein localises to the secretory vesicle membrane. The catalysed reaction is Hydrolysis of the 21-Trp-|-Val-22 bond in big endothelin to form endothelin 1.. Converts big endothelin-1 to endothelin-1. Also involved in the processing of various neuroendocrine peptides, including neurotensin, angiotensin I, substance P, proenkephalin-derived peptides, and prodynorphin-derived peptides. May play a role in amyloid-beta processing. The chain is Endothelin-converting enzyme 2 from Bos taurus (Bovine).